We begin with the raw amino-acid sequence, 467 residues long: DNA polymerase IV (467 aa).

The UmuC domain maps to Val5–Gly187. 2 residues coordinate Mg(2+): Asp9 and Asp104. The active site involves Glu105. Disordered stretches follow at residues Pro364–Val383 and Lys429–Asp449.

This sequence belongs to the DNA polymerase type-Y family. As to quaternary structure, monomer. Mg(2+) serves as cofactor.

It is found in the cytoplasm. It carries out the reaction DNA(n) + a 2'-deoxyribonucleoside 5'-triphosphate = DNA(n+1) + diphosphate. Its function is as follows. Poorly processive, error-prone DNA polymerase involved in untargeted mutagenesis. Copies undamaged DNA at stalled replication forks, which arise in vivo from mismatched or misaligned primer ends. These misaligned primers can be extended by PolIV. Exhibits no 3'-5' exonuclease (proofreading) activity. May be involved in translesional synthesis, in conjunction with the beta clamp from PolIII. In Corynebacterium glutamicum (strain ATCC 13032 / DSM 20300 / JCM 1318 / BCRC 11384 / CCUG 27702 / LMG 3730 / NBRC 12168 / NCIMB 10025 / NRRL B-2784 / 534), this protein is DNA polymerase IV.